The chain runs to 96 residues: Fruit-specific protein (96 aa).

3 disulfide bridges follow: C59/C75, C63/C78, and C69/C92.

As to expression, fruit specific.

This is Fruit-specific protein (2A11) from Solanum lycopersicum (Tomato).